The sequence spans 507 residues: Aldehyde dehydrogenase 1, mitochondrial (507 aa).

Residues 1-21 (MLATRNLVPIIRASIKWRIKL) constitute a mitochondrion transit peptide. 266–271 (GSTLVG) contributes to the NAD(+) binding site. Residues Glu289 and Cys323 contribute to the active site.

Belongs to the aldehyde dehydrogenase family. As to quaternary structure, homotetramer.

Its subcellular location is the mitochondrion matrix. The catalysed reaction is an aldehyde + NAD(+) + H2O = a carboxylate + NADH + 2 H(+). Its pathway is alcohol metabolism; ethanol degradation; acetate from ethanol: step 2/2. The sequence is that of Aldehyde dehydrogenase 1, mitochondrial (ALD1) from Saccharomyces cerevisiae (Baker's yeast).